We begin with the raw amino-acid sequence, 225 residues long: NAD(P)H-quinone oxidoreductase subunit K, chloroplastic (225 aa).

The [4Fe-4S] cluster site is built by Cys43, Cys44, Cys108, and Cys139.

This sequence belongs to the complex I 20 kDa subunit family. As to quaternary structure, NDH is composed of at least 16 different subunits, 5 of which are encoded in the nucleus. [4Fe-4S] cluster serves as cofactor.

Its subcellular location is the plastid. The protein localises to the chloroplast thylakoid membrane. The catalysed reaction is a plastoquinone + NADH + (n+1) H(+)(in) = a plastoquinol + NAD(+) + n H(+)(out). It carries out the reaction a plastoquinone + NADPH + (n+1) H(+)(in) = a plastoquinol + NADP(+) + n H(+)(out). Its function is as follows. NDH shuttles electrons from NAD(P)H:plastoquinone, via FMN and iron-sulfur (Fe-S) centers, to quinones in the photosynthetic chain and possibly in a chloroplast respiratory chain. The immediate electron acceptor for the enzyme in this species is believed to be plastoquinone. Couples the redox reaction to proton translocation, and thus conserves the redox energy in a proton gradient. This Daucus carota (Wild carrot) protein is NAD(P)H-quinone oxidoreductase subunit K, chloroplastic.